The sequence spans 217 residues: Uridylate kinase (217 aa).

6–10 (KISGR) is a binding site for ATP. G38 is a UMP binding site. ATP-binding residues include G39 and R43. UMP contacts are provided by residues D60 and 107 to 113 (FQPGQST). Residues N134, Y139, and D142 each contribute to the ATP site.

It belongs to the UMP kinase family. As to quaternary structure, homohexamer.

The protein localises to the cytoplasm. The enzyme catalyses UMP + ATP = UDP + ADP. It functions in the pathway pyrimidine metabolism; CTP biosynthesis via de novo pathway; UDP from UMP (UMPK route): step 1/1. With respect to regulation, inhibited by UTP. Catalyzes the reversible phosphorylation of UMP to UDP. In Pyrobaculum arsenaticum (strain DSM 13514 / JCM 11321 / PZ6), this protein is Uridylate kinase.